The primary structure comprises 572 residues: Proline--tRNA ligase (572 aa).

The protein belongs to the class-II aminoacyl-tRNA synthetase family. ProS type 1 subfamily. As to quaternary structure, homodimer.

It localises to the cytoplasm. It carries out the reaction tRNA(Pro) + L-proline + ATP = L-prolyl-tRNA(Pro) + AMP + diphosphate. Functionally, catalyzes the attachment of proline to tRNA(Pro) in a two-step reaction: proline is first activated by ATP to form Pro-AMP and then transferred to the acceptor end of tRNA(Pro). As ProRS can inadvertently accommodate and process non-cognate amino acids such as alanine and cysteine, to avoid such errors it has two additional distinct editing activities against alanine. One activity is designated as 'pretransfer' editing and involves the tRNA(Pro)-independent hydrolysis of activated Ala-AMP. The other activity is designated 'posttransfer' editing and involves deacylation of mischarged Ala-tRNA(Pro). The misacylated Cys-tRNA(Pro) is not edited by ProRS. In Salmonella choleraesuis (strain SC-B67), this protein is Proline--tRNA ligase.